The primary structure comprises 506 residues: Peptidyl-prolyl cis-trans isomerase CYP59 (506 aa).

One can recognise a PPIase cyclophilin-type domain in the interval Met-1–Ile-161. Positions Asn-243 to Ser-321 constitute an RRM domain. The segment at Gly-341–Gly-357 adopts a CCHC-type zinc-finger fold. Composition is skewed to basic and acidic residues over residues Glu-388–Gln-404 and Gly-412–Arg-506. A disordered region spans residues Glu-388–Arg-506.

It belongs to the cyclophilin-type PPIase family. Component of the BZR1 complex. Interacts with NRPB1 (via CTD domain), SCL28, SCL30, SCL30A, SCL33, SC35, SR30, SR34, RSZ21, RS2Z33, RS31 and RS40. In terms of tissue distribution, ubiquitous.

The protein resides in the nucleus. The enzyme catalyses [protein]-peptidylproline (omega=180) = [protein]-peptidylproline (omega=0). Functionally, PPIases accelerate the folding of proteins. It catalyzes the cis-trans isomerization of proline imidic peptide bonds in oligopeptides. Influences somehow regulation of RNA pol II (CTD) phosphorylation. Binds RNA with preferences for GC-rich sequences. Probably involved in activities connecting transcription and pre-mRNA processing. Involved in brassinostroid response. In Arabidopsis thaliana (Mouse-ear cress), this protein is Peptidyl-prolyl cis-trans isomerase CYP59 (CYP59).